The primary structure comprises 266 residues: MSRAGFDKYITVFSPEGSLYQVEYAFKAVTYAGLLTVAIRCKDAVLVFTQHSVPDKLMRPETITSLYNVNDNTGVCITGRAPDGKALVQKARNEASEYKYRYGMPMLVSVLAKPWQDMAQVRTQQAGMRLMGTIMTFVGMEQNDEDGAWIPQIYCVDPAGGAAVHACAVGKKQIEACAFLEKKQKNAPFHTLSQKEAAMIALAALQSALGESLRASGVEVGRCTADDHHFLRVSDREVKKWLTPLAKPGYRAAYVLVRHTFHVVNP.

Belongs to the peptidase T1A family. As to quaternary structure, the 26S proteasome consists of a 20S proteasome core and two 19S regulatory subunits. The 20S proteasome core is composed of 28 subunits that are arranged in four stacked rings, resulting in a barrel-shaped structure. The two end rings are each formed by seven alpha subunits, and the two central rings are each formed by seven beta subunits. The catalytic chamber with the active sites is on the inside of the barrel.

Its subcellular location is the cytoplasm. It is found in the nucleus. Functionally, the proteasome is a multicatalytic proteinase complex which is characterized by its ability to cleave peptides with Arg, Phe, Tyr, Leu, and Glu adjacent to the leaving group at neutral or slightly basic pH. The proteasome has an ATP-dependent proteolytic activity. In Trypanosoma brucei brucei, this protein is Proteasome subunit alpha type-1.